Reading from the N-terminus, the 427-residue chain is Serine--tRNA ligase (427 aa).

Position 229-231 (229-231) interacts with L-serine; sequence TAE. 260–262 contacts ATP; that stretch reads RSE. Residue Glu-283 coordinates L-serine. 347–350 lines the ATP pocket; sequence EISS. Ser-383 contacts L-serine.

Belongs to the class-II aminoacyl-tRNA synthetase family. Type-1 seryl-tRNA synthetase subfamily. As to quaternary structure, homodimer. The tRNA molecule binds across the dimer.

It is found in the cytoplasm. It carries out the reaction tRNA(Ser) + L-serine + ATP = L-seryl-tRNA(Ser) + AMP + diphosphate + H(+). The enzyme catalyses tRNA(Sec) + L-serine + ATP = L-seryl-tRNA(Sec) + AMP + diphosphate + H(+). It functions in the pathway aminoacyl-tRNA biosynthesis; selenocysteinyl-tRNA(Sec) biosynthesis; L-seryl-tRNA(Sec) from L-serine and tRNA(Sec): step 1/1. Its function is as follows. Catalyzes the attachment of serine to tRNA(Ser). Is also able to aminoacylate tRNA(Sec) with serine, to form the misacylated tRNA L-seryl-tRNA(Sec), which will be further converted into selenocysteinyl-tRNA(Sec). This chain is Serine--tRNA ligase, found in Oleidesulfovibrio alaskensis (strain ATCC BAA-1058 / DSM 17464 / G20) (Desulfovibrio alaskensis).